Consider the following 113-residue polypeptide: Large ribosomal subunit protein P1 (113 aa).

Residues 56 to 66 are compositionally biased toward low complexity; sequence TAAAAPAPAAG. Positions 56–113 are disordered; the sequence is TAAAAPAPAAGGSAGGEVEAADDDDEEDAEEEAADEGGDDDGDDDEEADGEGLGALFG. The segment covering 74–105 has biased composition (acidic residues); it reads EAADDDDEEDAEEEAADEGGDDDGDDDEEADG.

Belongs to the eukaryotic ribosomal protein P1/P2 family. In terms of assembly, part of the 50S ribosomal subunit. Homodimer, it forms part of the ribosomal stalk which helps the ribosome interact with GTP-bound translation factors. Forms a heptameric uL10/P0(P1)2(P1)2(P1)2 complex, where uL10/P0 forms an elongated spine to which the P1 dimers bind in a sequential fashion.

Forms part of the ribosomal stalk, playing a central role in the interaction of the ribosome with GTP-bound translation factors. In Haloferax volcanii (strain ATCC 29605 / DSM 3757 / JCM 8879 / NBRC 14742 / NCIMB 2012 / VKM B-1768 / DS2) (Halobacterium volcanii), this protein is Large ribosomal subunit protein P1.